A 94-amino-acid polypeptide reads, in one-letter code: Co-chaperonin GroES (94 aa).

The protein belongs to the GroES chaperonin family. In terms of assembly, heptamer of 7 subunits arranged in a ring. Interacts with the chaperonin GroEL.

Its subcellular location is the cytoplasm. Its function is as follows. Together with the chaperonin GroEL, plays an essential role in assisting protein folding. The GroEL-GroES system forms a nano-cage that allows encapsulation of the non-native substrate proteins and provides a physical environment optimized to promote and accelerate protein folding. GroES binds to the apical surface of the GroEL ring, thereby capping the opening of the GroEL channel. The chain is Co-chaperonin GroES from Streptococcus agalactiae.